We begin with the raw amino-acid sequence, 509 residues long: Subtelomeric hrmA-associated cluster protein AFUA_5G14880 (509 aa).

Functionally, part of the subtelomeric hrmA-associated cluster (HAC) containing genes that alter the hyphal surface (such as reduced total chitin or increased beta-glucan exposure) and perturb inter-hyphal interactions within the developing biofilms, resulting in a loss of vertically aligned polarized growing filaments. Consequently, this hypoxia-typic morphotype (called H-MORPH) with altered biofilm architecture leads to increased hypoxia fitness, increased host inflammation, rapid disease progression, and mortality in a murine model of invasive aspergillosis. In Aspergillus fumigatus (strain ATCC MYA-4609 / CBS 101355 / FGSC A1100 / Af293) (Neosartorya fumigata), this protein is Subtelomeric hrmA-associated cluster protein AFUA_5G14880.